The primary structure comprises 164 residues: Interferon gamma (164 aa).

Positions 1-19 are cleaved as a signal peptide; sequence MTCQTYNLFVLSVIMIYYG. N-linked (GlcNAc...) asparagine glycans are attached at residues Asn42 and Asn61.

Belongs to the type II (or gamma) interferon family. Homodimer.

It is found in the secreted. Produced by lymphocytes activated by specific antigens or mitogens. IFN-gamma, in addition to having antiviral activity, has important immunoregulatory functions. It is a potent activator of macrophages, it has antiproliferative effects on transformed cells and it can potentiate the antiviral and antitumor effects of the type I interferons. This is Interferon gamma (IFNG) from Numida meleagris (Helmeted guineafowl).